The sequence spans 539 residues: CTP synthase (539 aa).

Residues 1-267 (MTKFIFVTGG…DDLVIKRLDL (267 aa)) are amidoligase domain. Residue serine 13 participates in CTP binding. Serine 13 contributes to the UTP binding site. 14 to 19 (SLGKGI) serves as a coordination point for ATP. Tyrosine 54 is a binding site for L-glutamine. Aspartate 71 is a binding site for ATP. Mg(2+)-binding residues include aspartate 71 and glutamate 141. CTP contacts are provided by residues 148–150 (DIE), 188–193 (KTKPTQ), and lysine 224. Residues 188 to 193 (KTKPTQ) and lysine 224 each bind UTP. 240 to 242 (RDA) serves as a coordination point for ATP. The region spanning 293–535 (TIGLVGKYVS…IEAANKYKEA (243 aa)) is the Glutamine amidotransferase type-1 domain. Glycine 355 is an L-glutamine binding site. Cysteine 382 acts as the Nucleophile; for glutamine hydrolysis in catalysis. L-glutamine is bound by residues 383–386 (LGMQ), glutamate 406, and arginine 463. Catalysis depends on residues histidine 508 and glutamate 510.

This sequence belongs to the CTP synthase family. Homotetramer.

It catalyses the reaction UTP + L-glutamine + ATP + H2O = CTP + L-glutamate + ADP + phosphate + 2 H(+). It carries out the reaction L-glutamine + H2O = L-glutamate + NH4(+). The catalysed reaction is UTP + NH4(+) + ATP = CTP + ADP + phosphate + 2 H(+). It participates in pyrimidine metabolism; CTP biosynthesis via de novo pathway; CTP from UDP: step 2/2. With respect to regulation, allosterically activated by GTP, when glutamine is the substrate; GTP has no effect on the reaction when ammonia is the substrate. The allosteric effector GTP functions by stabilizing the protein conformation that binds the tetrahedral intermediate(s) formed during glutamine hydrolysis. Inhibited by the product CTP, via allosteric rather than competitive inhibition. Catalyzes the ATP-dependent amination of UTP to CTP with either L-glutamine or ammonia as the source of nitrogen. Regulates intracellular CTP levels through interactions with the four ribonucleotide triphosphates. The sequence is that of CTP synthase from Staphylococcus carnosus (strain TM300).